Consider the following 187-residue polypeptide: Tetraheme c-type cytochrome CymA (187 aa).

Over 1-12 the chain is Cytoplasmic; sequence MNWRALFKPSAK. A helical transmembrane segment spans residues 13–33; sequence YSILALLVVGIVIGVVGYFAT. Over 34–187 the chain is Periplasmic; sequence QQTLHATSTD…KGVAHPYPKG (154 aa). Heme c is bound by residues C46, C49, H64, C75, C78, H79, D97, C136, C139, H140, C173, C176, H177, and H182.

It belongs to the NapC/NirT/NrfH family. Homodimer. Requires heme c as cofactor.

The protein localises to the cell inner membrane. It carries out the reaction a quinol + 2 Fe(III)-[cytochrome c](out) = a quinone + 2 Fe(II)-[cytochrome c](out) + 2 H(+)(out). With respect to regulation, spectroscopic studies suggest that CymA requires a non-heme cofactor for quinol oxidation. Quinol dehydrogenase involved in several anaerobic electron transfer pathways. Acquires electrons from the membrane quinone pool and mediates their transfer to several periplasmic terminal reductases and redox shuttles, including the fumarate reductase FccA, the small tetraheme cytochrome (STC), the c-type cytochrome MtrA, the nitrate reductase NapA (either through NapB or directly), the nitrite reductase NrfA and probably also the DmsE subunit of dimethyl sulfoxide (DMSO) reductase. Required for growth on fumarate and on DMSO, and for the reduction of iron(III), manganese(IV), nitrite and nitrate. Not essential for growth on trimethylamine-N-oxide (TMAO). In Shewanella oneidensis (strain ATCC 700550 / JCM 31522 / CIP 106686 / LMG 19005 / NCIMB 14063 / MR-1), this protein is Tetraheme c-type cytochrome CymA.